The chain runs to 659 residues: Exoribonuclease 2 (659 aa).

The RNB domain occupies 189-532; that stretch reads REDLTHLYFT…HRLIKQVLSN (344 aa). Residues 576 to 658 enclose the S1 motif domain; it reads NVEFDGEIQD…ETRSVVGDVL (83 aa).

It belongs to the RNR ribonuclease family. RNase II subfamily.

It is found in the cytoplasm. It carries out the reaction Exonucleolytic cleavage in the 3'- to 5'-direction to yield nucleoside 5'-phosphates.. In terms of biological role, involved in mRNA degradation. Hydrolyzes single-stranded polyribonucleotides processively in the 3' to 5' direction. In Glaesserella parasuis serovar 5 (strain SH0165) (Haemophilus parasuis), this protein is Exoribonuclease 2.